The chain runs to 197 residues: Recombination protein RecR (197 aa).

Residues 56–71 (CPVCGTLDTRAPCSIC) form a C4-type zinc finger. In terms of domain architecture, Toprim spans 79-174 (TLICVVRDVA…TVSGLAQGVP (96 aa)).

The protein belongs to the RecR family.

In terms of biological role, may play a role in DNA repair. It seems to be involved in an RecBC-independent recombinational process of DNA repair. It may act with RecF and RecO. This is Recombination protein RecR from Rhodospirillum rubrum (strain ATCC 11170 / ATH 1.1.1 / DSM 467 / LMG 4362 / NCIMB 8255 / S1).